Here is a 278-residue protein sequence, read N- to C-terminus: MAIKIYKPTTNGRRHMTSSDFAEITKTKPEKTLLESQSHTAGRNSYGRITVRHRGGGHKQKYRIIDFKRNKDNVKAVVNAIEYDPNRTANIALLHYTDGIKAYILAPKGLKVGDIVESGDSVDIKPGNALALKNIPTGTSIHNIELKPGKGGQLVRSAGASAQVLGFDGNYTLVRLQSGEVRKILSSCRATIGVVGNEQHSLIQLGKAGRKRWLGKRPQSRGSVMNPNDHPHGGGEGKAPVGRPQPMTPWGKKARGIKTRDVKKASEKLIIRHRKGSK.

A compositionally biased stretch (basic residues) spans 210 to 219 (RKRWLGKRPQ). A disordered region spans residues 210-278 (RKRWLGKRPQ…LIIRHRKGSK (69 aa)). Residues 258 to 270 (KTRDVKKASEKLI) are compositionally biased toward basic and acidic residues.

Belongs to the universal ribosomal protein uL2 family. As to quaternary structure, part of the 50S ribosomal subunit. Forms a bridge to the 30S subunit in the 70S ribosome.

Functionally, one of the primary rRNA binding proteins. Required for association of the 30S and 50S subunits to form the 70S ribosome, for tRNA binding and peptide bond formation. It has been suggested to have peptidyltransferase activity; this is somewhat controversial. Makes several contacts with the 16S rRNA in the 70S ribosome. This Lactobacillus acidophilus (strain ATCC 700396 / NCK56 / N2 / NCFM) protein is Large ribosomal subunit protein uL2.